The following is a 247-amino-acid chain: Ribosomal RNA large subunit methyltransferase E (247 aa).

Residues G99, W101, D123, D139, and D162 each contribute to the S-adenosyl-L-methionine site. K202 serves as the catalytic Proton acceptor.

Belongs to the class I-like SAM-binding methyltransferase superfamily. RNA methyltransferase RlmE family.

It is found in the cytoplasm. The enzyme catalyses uridine(2552) in 23S rRNA + S-adenosyl-L-methionine = 2'-O-methyluridine(2552) in 23S rRNA + S-adenosyl-L-homocysteine + H(+). Specifically methylates the uridine in position 2552 of 23S rRNA at the 2'-O position of the ribose in the fully assembled 50S ribosomal subunit. The protein is Ribosomal RNA large subunit methyltransferase E of Anaplasma phagocytophilum (strain HZ).